Here is a 145-residue protein sequence, read N- to C-terminus: MRVVLQKVNHAAVSIDDEVVGKIGLGYFLLVGFAPDDTEEKLNYLVHKITNLRVFEDENGKMNKGLRDVNGAILSVSQFTLYADTKHGNRPGFSQAASPEIAEPLYDLFNQKLAATGIPVETGHFGAMMKIDLENDGPTTIIYER.

A Gly-cisPro motif, important for rejection of L-amino acids motif is present at residues 137–138; sequence GP.

It belongs to the DTD family. As to quaternary structure, homodimer.

It localises to the cytoplasm. It carries out the reaction glycyl-tRNA(Ala) + H2O = tRNA(Ala) + glycine + H(+). The enzyme catalyses a D-aminoacyl-tRNA + H2O = a tRNA + a D-alpha-amino acid + H(+). An aminoacyl-tRNA editing enzyme that deacylates mischarged D-aminoacyl-tRNAs. Also deacylates mischarged glycyl-tRNA(Ala), protecting cells against glycine mischarging by AlaRS. Acts via tRNA-based rather than protein-based catalysis; rejects L-amino acids rather than detecting D-amino acids in the active site. By recycling D-aminoacyl-tRNA to D-amino acids and free tRNA molecules, this enzyme counteracts the toxicity associated with the formation of D-aminoacyl-tRNA entities in vivo and helps enforce protein L-homochirality. The protein is D-aminoacyl-tRNA deacylase of Limosilactobacillus reuteri (strain DSM 20016) (Lactobacillus reuteri).